Reading from the N-terminus, the 442-residue chain is Histidinol dehydrogenase (442 aa).

NAD(+)-binding residues include Tyr142, Gln204, and Asn227. Ser250, Gln272, and His275 together coordinate substrate. Positions 272 and 275 each coordinate Zn(2+). Catalysis depends on proton acceptor residues Glu340 and His341. Positions 341, 374, 428, and 433 each coordinate substrate. Asp374 is a Zn(2+) binding site. His433 is a binding site for Zn(2+).

Belongs to the histidinol dehydrogenase family. Zn(2+) serves as cofactor.

The catalysed reaction is L-histidinol + 2 NAD(+) + H2O = L-histidine + 2 NADH + 3 H(+). It functions in the pathway amino-acid biosynthesis; L-histidine biosynthesis; L-histidine from 5-phospho-alpha-D-ribose 1-diphosphate: step 9/9. Its function is as follows. Catalyzes the sequential NAD-dependent oxidations of L-histidinol to L-histidinaldehyde and then to L-histidine. This is Histidinol dehydrogenase from Prochlorococcus marinus (strain MIT 9313).